We begin with the raw amino-acid sequence, 537 residues long: Methylmalonate-semialdehyde/malonate-semialdehyde dehydrogenase [acylating], mitochondrial (537 aa).

A mitochondrion-targeting transit peptide spans 1–34; it reads MAAVAVAAAAAALRARILQVSSKVNSSWQPASSF. N6-acetyllysine; alternate occurs at positions 49, 54, 57, and 78. Lysine 49, lysine 54, lysine 57, and lysine 78 each carry N6-succinyllysine; alternate. Residue lysine 89 is modified to N6-acetyllysine. An N6-acetyllysine; alternate mark is found at lysine 119 and lysine 131. 2 positions are modified to N6-succinyllysine; alternate: lysine 119 and lysine 131. Positions 185, 187, 211, 214, 215, and 264 each coordinate NAD(+). Serine 264 carries the phosphoserine modification. N6-acetyllysine is present on lysine 300. Cysteine 319 functions as the Nucleophile in the catalytic mechanism. An N6-acetyllysine mark is found at lysine 332 and lysine 333. An N6-acetyllysine; alternate mark is found at lysine 366 and lysine 378. 2 positions are modified to N6-succinyllysine; alternate: lysine 366 and lysine 378. Serine 382 is modified (phosphoserine). Lysine 393 is subject to N6-succinyllysine. Residue glutamate 419 coordinates NAD(+). Lysine 502 bears the N6-acetyllysine mark. The residue at position 519 (lysine 519) is an N6-succinyllysine.

The protein belongs to the aldehyde dehydrogenase family. In terms of assembly, homodimer. In terms of processing, the N-terminus is blocked.

It is found in the mitochondrion. The enzyme catalyses 2-methyl-3-oxopropanoate + NAD(+) + CoA + H2O = propanoyl-CoA + hydrogencarbonate + NADH + H(+). The catalysed reaction is 3-oxopropanoate + NAD(+) + CoA + H2O = hydrogencarbonate + acetyl-CoA + NADH + H(+). It catalyses the reaction (R)-2-methyl-3-oxopropanoate + NAD(+) + CoA + H2O = propanoyl-CoA + hydrogencarbonate + NADH + H(+). It carries out the reaction (S)-2-methyl-3-oxopropanoate + NAD(+) + CoA + H2O = propanoyl-CoA + hydrogencarbonate + NADH + H(+). Functionally, malonate and methylmalonate semialdehyde dehydrogenase involved in the catabolism of valine, thymine, and compounds catabolized by way of beta-alanine, including uracil and cytidine. The polypeptide is Methylmalonate-semialdehyde/malonate-semialdehyde dehydrogenase [acylating], mitochondrial (ALDH6A1) (Bos taurus (Bovine)).